Reading from the N-terminus, the 308-residue chain is GMP synthase [glutamine-hydrolyzing] subunit B (308 aa).

The GMPS ATP-PPase domain occupies 1-185 (MDWGRFVEEK…LGLPEKIYNR (185 aa)). 28–34 (SGGVDSS) is a binding site for ATP.

In terms of assembly, heterodimer composed of a glutamine amidotransferase subunit (A) and a GMP-binding subunit (B).

It carries out the reaction XMP + L-glutamine + ATP + H2O = GMP + L-glutamate + AMP + diphosphate + 2 H(+). It functions in the pathway purine metabolism; GMP biosynthesis; GMP from XMP (L-Gln route): step 1/1. Functionally, catalyzes the synthesis of GMP from XMP. In Pyrococcus horikoshii (strain ATCC 700860 / DSM 12428 / JCM 9974 / NBRC 100139 / OT-3), this protein is GMP synthase [glutamine-hydrolyzing] subunit B (guaAB).